Reading from the N-terminus, the 132-residue chain is Small ribosomal subunit protein uS8 (132 aa).

This sequence belongs to the universal ribosomal protein uS8 family. In terms of assembly, part of the 30S ribosomal subunit. Contacts proteins S5 and S12.

Functionally, one of the primary rRNA binding proteins, it binds directly to 16S rRNA central domain where it helps coordinate assembly of the platform of the 30S subunit. This Streptococcus pyogenes serotype M1 protein is Small ribosomal subunit protein uS8.